Reading from the N-terminus, the 176-residue chain is Ribosome maturation factor RimM (176 aa).

In terms of domain architecture, PRC barrel spans 100-173 (PEEYYDYQLI…RLRIDPPPGL (74 aa)).

This sequence belongs to the RimM family. In terms of assembly, binds ribosomal protein uS19.

Its subcellular location is the cytoplasm. In terms of biological role, an accessory protein needed during the final step in the assembly of 30S ribosomal subunit, possibly for assembly of the head region. Essential for efficient processing of 16S rRNA. May be needed both before and after RbfA during the maturation of 16S rRNA. It has affinity for free ribosomal 30S subunits but not for 70S ribosomes. The sequence is that of Ribosome maturation factor RimM from Acidothermus cellulolyticus (strain ATCC 43068 / DSM 8971 / 11B).